The primary structure comprises 472 residues: L-aspartate oxidase (472 aa).

FAD-binding positions include 7 to 10 (SGIA), Ser29, 36 to 37 (ST), 42 to 43 (GG), and Asp191. Arg257 functions as the Proton donor/acceptor in the catalytic mechanism. Residues Glu337 and 353–354 (SL) contribute to the FAD site.

This sequence belongs to the FAD-dependent oxidoreductase 2 family. NadB subfamily. As to quaternary structure, monomer. It depends on FAD as a cofactor.

The protein localises to the cytoplasm. It carries out the reaction L-aspartate + O2 = iminosuccinate + H2O2. Its pathway is cofactor biosynthesis; NAD(+) biosynthesis; iminoaspartate from L-aspartate (oxidase route): step 1/1. Its function is as follows. Catalyzes the oxidation of L-aspartate to iminoaspartate, the first step in the de novo biosynthesis of NAD(+). Can also use L-asparagine, but not L-phenylalanine, L-glutamate, glycine, L-proline, L-alanine and D-aspartate. In Sulfurisphaera tokodaii (strain DSM 16993 / JCM 10545 / NBRC 100140 / 7) (Sulfolobus tokodaii), this protein is L-aspartate oxidase.